A 524-amino-acid chain; its full sequence is Nucleoporin NUP56 (524 aa).

Residues 1-219 (MADDPHNTST…SSMAKFASST (219 aa)) form a disordered region. 3 stretches are compositionally biased toward basic and acidic residues: residues 28–80 (VKED…EPEK), 114–168 (THDE…KEVE), and 179–199 (SAEK…KVDK). The Nuclear localization signal signature appears at 37 to 44 (ARRELKQT). Residues 111–133 (KKRTHDELEQDGKEEEEKKEGEK) are a coiled coil. Residues 200-219 (PQTSSSAFANSSMAKFASST) are compositionally biased toward polar residues. 7 FG repeats span residues 223-224 (FG), 226-227 (FG), 237-238 (FG), 247-248 (FG), 266-267 (FG), 312-313 (FG), and 328-329 (FG). 2 disordered regions span residues 247 to 284 (FGSK…QAGG) and 300 to 371 (GSSA…GEEK). Positions 248-277 (GSKSADASAAPAGPPKLSFGSASAASPFAS) are enriched in low complexity. 2 stretches are compositionally biased toward acidic residues: residues 332–345 (ESDE…EEGE) and 352–362 (GEGEEKEEEEK). Residues 345–376 (EENKSENGEGEEKEEEEKEEKASGEEKKKFKL) are a coiled coil. The RanBD1 domain maps to 377–475 (QKVHIDDGEG…TPILPAMKFQ (99 aa)). A coiled-coil region spans residues 503–524 (SQANATQFSNMVEKIKEKLAAA).

As to quaternary structure, the nuclear pore complex (NPC) constitutes the exclusive means of nucleocytoplasmic transport. NPCs allow the passive diffusion of ions and small molecules and the active, nuclear transport receptor-mediated bidirectional transport of macromolecules such as proteins, RNAs, ribonucleoparticles (RNPs), and ribosomal subunits across the nuclear envelope. The 55-60 MDa NPC is composed of at least 28 different subunits: AMO1, ELYS, GLE1, GLE2, MLP1, NDC1, NIC96, NSP1, NUP133, NUP145, NUP152, NUP159, NUP170, NUP188, NUP192, NUP37, NUP49, NUP53, NUP56, NUP57, NUP82, NUP84, NUP85, POM152, POM33, POM34, SEC13 and SEH1. Due to its 8-fold rotational symmetry, all subunits are present with 8 copies or multiples thereof.

The protein localises to the nucleus. It is found in the nuclear pore complex. It localises to the nucleus membrane. Functionally, functions as a component of the nuclear pore complex (NPC). NPC components, collectively referred to as nucleoporins (NUPs), can play the role of both NPC structural components and of docking or interaction partners for transiently associated nuclear transport factors. Active directional transport is assured by both, a Phe-Gly (FG) repeat affinity gradient for these transport factors across the NPC and a transport cofactor concentration gradient across the nuclear envelope (GSP1 and GSP2 GTPases associated predominantly with GTP in the nucleus, with GDP in the cytoplasm). The chain is Nucleoporin NUP56 (NUP56) from Chaetomium thermophilum (strain DSM 1495 / CBS 144.50 / IMI 039719) (Thermochaetoides thermophila).